The primary structure comprises 728 residues: Phosphoribosylformylglycinamidine synthase subunit PurL (728 aa).

H42 is an active-site residue. ATP-binding residues include Y45 and K84. E86 lines the Mg(2+) pocket. Substrate is bound by residues 87 to 90 (SHNH) and R109. The active-site Proton acceptor is the H88. D110 contributes to the Mg(2+) binding site. Residue Q237 participates in substrate binding. A Mg(2+)-binding site is contributed by D265. 309–311 (ESQ) provides a ligand contact to substrate. ATP is bound by residues D491 and G528. N529 contributes to the Mg(2+) binding site. Position 531 (S531) interacts with substrate.

It belongs to the FGAMS family. In terms of assembly, monomer. Part of the FGAM synthase complex composed of 1 PurL, 1 PurQ and 2 PurS subunits.

Its subcellular location is the cytoplasm. It catalyses the reaction N(2)-formyl-N(1)-(5-phospho-beta-D-ribosyl)glycinamide + L-glutamine + ATP + H2O = 2-formamido-N(1)-(5-O-phospho-beta-D-ribosyl)acetamidine + L-glutamate + ADP + phosphate + H(+). It participates in purine metabolism; IMP biosynthesis via de novo pathway; 5-amino-1-(5-phospho-D-ribosyl)imidazole from N(2)-formyl-N(1)-(5-phospho-D-ribosyl)glycinamide: step 1/2. Part of the phosphoribosylformylglycinamidine synthase complex involved in the purines biosynthetic pathway. Catalyzes the ATP-dependent conversion of formylglycinamide ribonucleotide (FGAR) and glutamine to yield formylglycinamidine ribonucleotide (FGAM) and glutamate. The FGAM synthase complex is composed of three subunits. PurQ produces an ammonia molecule by converting glutamine to glutamate. PurL transfers the ammonia molecule to FGAR to form FGAM in an ATP-dependent manner. PurS interacts with PurQ and PurL and is thought to assist in the transfer of the ammonia molecule from PurQ to PurL. The polypeptide is Phosphoribosylformylglycinamidine synthase subunit PurL (Campylobacter jejuni subsp. jejuni serotype O:6 (strain 81116 / NCTC 11828)).